The chain runs to 193 residues: Acyl-homoserine-lactone synthase (193 aa).

The protein belongs to the autoinducer synthase family.

The enzyme catalyses a fatty acyl-[ACP] + S-adenosyl-L-methionine = an N-acyl-L-homoserine lactone + S-methyl-5'-thioadenosine + holo-[ACP] + H(+). Required for the synthesis of N-(3-oxodecanoyl)-L-homoserine lactone (ODHL), an autoinducer molecule which binds to VanR. This Vibrio anguillarum (Listonella anguillarum) protein is Acyl-homoserine-lactone synthase (vanI).